Here is a 344-residue protein sequence, read N- to C-terminus: Uroporphyrinogen decarboxylase (344 aa).

Residues 23–27, Asp-73, Tyr-149, Thr-204, and His-321 each bind substrate; that span reads RQAGR.

This sequence belongs to the uroporphyrinogen decarboxylase family. Homodimer.

The protein localises to the cytoplasm. The catalysed reaction is uroporphyrinogen III + 4 H(+) = coproporphyrinogen III + 4 CO2. It functions in the pathway porphyrin-containing compound metabolism; protoporphyrin-IX biosynthesis; coproporphyrinogen-III from 5-aminolevulinate: step 4/4. Functionally, catalyzes the decarboxylation of four acetate groups of uroporphyrinogen-III to yield coproporphyrinogen-III. This Francisella tularensis subsp. tularensis (strain FSC 198) protein is Uroporphyrinogen decarboxylase.